Consider the following 338-residue polypeptide: MSFIDEVKINVKSGDGGAGCVSFRREKFIPLGGPDGGDGGKGGDVIVKVSSHLSTLLDLRQHPHQKAGRGKNGMGSDRHGANGHTLEILVPQGTVIKDAETGEILADLAEPDSSMVLLKGGRGGQGNARFKTATHKAPKFAQPGEPGEERWIRMELKLMADVGLLGMPSVGKSSLIAKISAARPKIAEYHFTTLKPSLGVVQYKNYRSFVMADIPGLIEGASEGAGLGHRFLKHLERTGQLLHLLDLSWMPDRDPIAEYEAINRELALFNPELADKRQTVVVNKIDLPHVRENLKEILPYFEERGIKVFPISAATGEGIPELLDDIAFNLWGEPEETW.

The 159-residue stretch at 1-159 (MSFIDEVKIN…RWIRMELKLM (159 aa)) folds into the Obg domain. The tract at residues 58–79 (DLRQHPHQKAGRGKNGMGSDRH) is disordered. One can recognise an OBG-type G domain in the interval 160 to 331 (ADVGLLGMPS…LLDDIAFNLW (172 aa)). Residues 166–173 (GMPSVGKS), 191–195 (FTTLK), 213–216 (DIPG), 283–286 (NKID), and 312–314 (SAA) each bind GTP. Mg(2+)-binding residues include Ser-173 and Thr-193.

The protein belongs to the TRAFAC class OBG-HflX-like GTPase superfamily. OBG GTPase family. In terms of assembly, monomer. Mg(2+) is required as a cofactor.

The protein localises to the cytoplasm. Its function is as follows. An essential GTPase which binds GTP, GDP and possibly (p)ppGpp with moderate affinity, with high nucleotide exchange rates and a fairly low GTP hydrolysis rate. Plays a role in control of the cell cycle, stress response, ribosome biogenesis and in those bacteria that undergo differentiation, in morphogenesis control. The protein is GTPase Obg of Citrifermentans bemidjiense (strain ATCC BAA-1014 / DSM 16622 / JCM 12645 / Bem) (Geobacter bemidjiensis).